Consider the following 328-residue polypeptide: Putative lipase LIH1 (328 aa).

The active-site Nucleophile is the serine 181. Active-site charge relay system residues include aspartate 253 and histidine 315.

It belongs to the AB hydrolase superfamily. Lipase family.

It catalyses the reaction a triacylglycerol + H2O = a diacylglycerol + a fatty acid + H(+). In terms of biological role, lipases catalyze the hydrolysis of the ester bond of tri-, di- and monoglycerides of long-chain fatty acids into fatty acids and glycerol. The chain is Putative lipase LIH1 from Saccharomyces cerevisiae (strain ATCC 204508 / S288c) (Baker's yeast).